The following is a 413-amino-acid chain: Palmitoyltransferase ZDHHC6 (413 aa).

The Cytoplasmic portion of the chain corresponds to 1–24 (MGTFCSVVKFENLQELKRLCHWGP). The helical transmembrane segment at 25 to 45 (IIALGVIAICSAMAMIDSVLW) threads the bilayer. The Lumenal segment spans residues 46 to 57 (YWPLHTTGGSVN). A helical transmembrane segment spans residues 58 to 78 (FIMLINWTVMILYNYFNAMFV). At 79 to 143 (GPGFVPLGWK…NCCGYQNHAS (65 aa)) the chain is on the cytoplasmic side. The 51-residue stretch at 99-149 (QYCKVCQAYKAPRSHHCRKCNRCVMKMDHHCPWINNCCGYQNHASFTLFLL) folds into the DHHC domain. Cys-129 acts as the S-palmitoyl cysteine intermediate in catalysis. The helical transmembrane segment at 144–164 (FTLFLLLAPLGCIHAAFIFVM) threads the bilayer. At 165 to 194 (TMYTQLYNRLSFGWNTVKIDMSAARRDPLP) the chain is on the lumenal side. The chain crosses the membrane as a helical span at residues 195-215 (IIPFGLAAFAATLFALGLALG). Residues 216 to 413 (TTIAVGMLFF…QAPEGEKKNR (198 aa)) lie on the Cytoplasmic side of the membrane. Positions 313–398 (VRSVRYKVIE…PRNCVEKCPC (86 aa)) constitute an SH3 domain. 3 S-palmitoyl cysteine lipidation sites follow: Cys-328, Cys-329, and Cys-343. A Di-lysine motif motif is present at residues 410–413 (KKNR).

The protein belongs to the DHHC palmitoyltransferase family. As to quaternary structure, homooligomerizes. Interacts with SELENOK. Post-translationally, palmitoylated at 3 different sites by ZDHHC16. The combination of the different palmitoylation events strongly affects the quaternary assembly of ZDHHC6, its localization, stability and function. Palmitoylation at Cys-328 accelerates the turnover of ZDHHC6. Depalmitoylated by LYPLA2.

It is found in the endoplasmic reticulum membrane. The enzyme catalyses L-cysteinyl-[protein] + hexadecanoyl-CoA = S-hexadecanoyl-L-cysteinyl-[protein] + CoA. It carries out the reaction L-cysteinyl-[protein] + octadecanoyl-CoA = S-octadecanoyl-L-cysteinyl-[protein] + CoA. In terms of biological role, endoplasmic reticulum palmitoyl acyltransferase that mediates palmitoylation of proteins such as AMFR, CALX, ITPR1 and TFRC. Palmitoylates calnexin (CALX), which is required for its association with the ribosome-translocon complex and efficient folding of glycosylated proteins. Mediates palmitoylation of AMFR, promoting AMFR distribution to the peripheral endoplasmic reticulum. Together with SELENOK, palmitoylates ITPR1 in immune cells, leading to regulate ITPR1 stability and function. Stearoyltransferase that mediates stearoylation of TFRC to inhibit TFRC-mediated activation of the JNK pathway and mitochondrial fragmentation. This Bos taurus (Bovine) protein is Palmitoyltransferase ZDHHC6.